Here is a 378-residue protein sequence, read N- to C-terminus: Succinyl-diaminopimelate desuccinylase (378 aa).

H68 serves as a coordination point for Zn(2+). The active site involves D70. D101 serves as a coordination point for Zn(2+). The Proton acceptor role is filled by E135. Residues E136, E164, and H350 each contribute to the Zn(2+) site.

This sequence belongs to the peptidase M20A family. DapE subfamily. In terms of assembly, homodimer. Zn(2+) serves as cofactor. The cofactor is Co(2+).

The enzyme catalyses N-succinyl-(2S,6S)-2,6-diaminopimelate + H2O = (2S,6S)-2,6-diaminopimelate + succinate. Its pathway is amino-acid biosynthesis; L-lysine biosynthesis via DAP pathway; LL-2,6-diaminopimelate from (S)-tetrahydrodipicolinate (succinylase route): step 3/3. Catalyzes the hydrolysis of N-succinyl-L,L-diaminopimelic acid (SDAP), forming succinate and LL-2,6-diaminopimelate (DAP), an intermediate involved in the bacterial biosynthesis of lysine and meso-diaminopimelic acid, an essential component of bacterial cell walls. The polypeptide is Succinyl-diaminopimelate desuccinylase (Acinetobacter baumannii (strain ACICU)).